Reading from the N-terminus, the 916-residue chain is Chitin synthase B (916 aa).

Disordered stretches follow at residues 1–84 and 114–141; these read MAYQ…AGFH and SPYA…GGGL. N-linked (GlcNAc...) asparagine glycosylation is present at Asn18. Positions 60–75 are enriched in polar residues; sequence RGTSPVRPTSGYSLTE. N-linked (GlcNAc...) asparagine glycosylation is present at Asn546. Transmembrane regions (helical) follow at residues 572–594, 628–648, 663–683, 715–735, 743–763, 845–865, and 884–904; these read MFFL…FSLA, IINT…FILA, SFVV…YLVV, IIII…FMYL, SFPA…VYAF, LVTL…SDGM, and ALLW…CWFL.

The protein belongs to the chitin synthase family. Class III subfamily.

It is found in the cell membrane. It catalyses the reaction [(1-&gt;4)-N-acetyl-beta-D-glucosaminyl](n) + UDP-N-acetyl-alpha-D-glucosamine = [(1-&gt;4)-N-acetyl-beta-D-glucosaminyl](n+1) + UDP + H(+). In terms of biological role, polymerizes chitin, a structural polymer of the cell wall and septum, by transferring the sugar moiety of UDP-GlcNAc to the non-reducing end of the growing chitin polymer. Involved in hyphal growth and more particularly in branching. The chain is Chitin synthase B from Aspergillus oryzae (strain ATCC 42149 / RIB 40) (Yellow koji mold).